A 311-amino-acid chain; its full sequence is Peptide methionine sulfoxide reductase MsrA/MsrB (311 aa).

Positions 1 to 155 are peptide methionine sulfoxide reductase A; sequence MAEIYLAGGC…PGGYCHINVN (155 aa). Residue C10 is part of the active site. Residues 172-295 form the MsrB domain; the sequence is DAELKEQLTQ…NSAALRFIPK (124 aa). C284 acts as the Nucleophile in catalysis.

This sequence in the N-terminal section; belongs to the MsrA Met sulfoxide reductase family. It in the C-terminal section; belongs to the MsrB Met sulfoxide reductase family.

The enzyme catalyses L-methionyl-[protein] + [thioredoxin]-disulfide + H2O = L-methionyl-(S)-S-oxide-[protein] + [thioredoxin]-dithiol. The catalysed reaction is [thioredoxin]-disulfide + L-methionine + H2O = L-methionine (S)-S-oxide + [thioredoxin]-dithiol. It catalyses the reaction L-methionyl-[protein] + [thioredoxin]-disulfide + H2O = L-methionyl-(R)-S-oxide-[protein] + [thioredoxin]-dithiol. Its function is as follows. Has an important function as a repair enzyme for proteins that have been inactivated by oxidation. Catalyzes the reversible oxidation-reduction of methionine sulfoxide in proteins to methionine. Involved in protection against oxidative stress when the bacterium enters the host bloodstream and required for maximal growth under aerobic and anaerobic conditions. The chain is Peptide methionine sulfoxide reductase MsrA/MsrB (msrAB) from Streptococcus gordonii (strain Challis / ATCC 35105 / BCRC 15272 / CH1 / DL1 / V288).